Here is a 228-residue protein sequence, read N- to C-terminus: Ribosomal RNA small subunit methyltransferase G (228 aa).

Residues Gly-82, Leu-87, 105 to 107 (DAT), 133 to 134 (VE), and Arg-147 contribute to the S-adenosyl-L-methionine site.

It belongs to the methyltransferase superfamily. RNA methyltransferase RsmG family.

It localises to the cytoplasm. Specifically methylates the N7 position of a guanine in 16S rRNA. The chain is Ribosomal RNA small subunit methyltransferase G from Pelodictyon phaeoclathratiforme (strain DSM 5477 / BU-1).